We begin with the raw amino-acid sequence, 326 residues long: Light-induced protein, chloroplastic (326 aa).

The N-terminal 63 residues, 1–63 (MASISSLNQI…TNPKPKFTAQ (63 aa)), are a transit peptide targeting the chloroplast.

Belongs to the LIPC family. As to quaternary structure, associates with the major light-harvesting antenna complex polypeptides of the PSII oxygen-evolving complex. Expressed at high levels in leaves and in the petals and anthers of flowers.

It is found in the plastid. The protein localises to the chloroplast thylakoid membrane. Functionally, required for normal plant growth. May be both photoprotective and play an ancillary role in photosynthesis. May structurally stabilize thylakoids during osmotic and oxidative stress. This chain is Light-induced protein, chloroplastic, found in Solanum demissum (Wild potato).